The sequence spans 763 residues: Phosphoglycerol transferase I (763 aa).

4 helical membrane-spanning segments follow: residues 1 to 21 (MSEL…AWKA), 26 to 46 (WWFA…ITLF), 77 to 97 (ILPG…LGWI), and 108 to 128 (FGYS…SPAF).

It belongs to the OpgB family.

It localises to the cell inner membrane. The enzyme catalyses a phosphatidylglycerol + a membrane-derived-oligosaccharide D-glucose = a 1,2-diacyl-sn-glycerol + a membrane-derived-oligosaccharide 6-(glycerophospho)-D-glucose.. The protein operates within glycan metabolism; osmoregulated periplasmic glucan (OPG) biosynthesis. In terms of biological role, transfers a phosphoglycerol residue from phosphatidylglycerol to the membrane-bound nascent glucan backbones. The chain is Phosphoglycerol transferase I from Escherichia coli O17:K52:H18 (strain UMN026 / ExPEC).